A 233-amino-acid polypeptide reads, in one-letter code: Phosphatidylserine decarboxylase proenzyme (233 aa).

Ser-190 acts as the Schiff-base intermediate with substrate; via pyruvic acid in catalysis. Ser-190 carries the post-translational modification Pyruvic acid (Ser); by autocatalysis.

The protein belongs to the phosphatidylserine decarboxylase family. PSD-A subfamily. As to quaternary structure, heterodimer of a large membrane-associated beta subunit and a small pyruvoyl-containing alpha subunit. Requires pyruvate as cofactor. Is synthesized initially as an inactive proenzyme. Formation of the active enzyme involves a self-maturation process in which the active site pyruvoyl group is generated from an internal serine residue via an autocatalytic post-translational modification. Two non-identical subunits are generated from the proenzyme in this reaction, and the pyruvate is formed at the N-terminus of the alpha chain, which is derived from the carboxyl end of the proenzyme. The post-translation cleavage follows an unusual pathway, termed non-hydrolytic serinolysis, in which the side chain hydroxyl group of the serine supplies its oxygen atom to form the C-terminus of the beta chain, while the remainder of the serine residue undergoes an oxidative deamination to produce ammonia and the pyruvoyl prosthetic group on the alpha chain.

It is found in the cell membrane. It carries out the reaction a 1,2-diacyl-sn-glycero-3-phospho-L-serine + H(+) = a 1,2-diacyl-sn-glycero-3-phosphoethanolamine + CO2. Its pathway is phospholipid metabolism; phosphatidylethanolamine biosynthesis; phosphatidylethanolamine from CDP-diacylglycerol: step 2/2. Its function is as follows. Catalyzes the formation of phosphatidylethanolamine (PtdEtn) from phosphatidylserine (PtdSer). The protein is Phosphatidylserine decarboxylase proenzyme of Azorhizobium caulinodans (strain ATCC 43989 / DSM 5975 / JCM 20966 / LMG 6465 / NBRC 14845 / NCIMB 13405 / ORS 571).